The primary structure comprises 257 residues: Exosome complex component Rrp4 (257 aa).

Positions 65–137 (GDNVLGKIVD…EVNQIDLTTK (73 aa)) constitute an S1 motif domain. Residues 147 to 206 (RGGQLVTITPSKVPRLIGKGGSMINMIKTLTGTRIIVGQNGWVWVSGKNDELERLAIEAI) enclose the KH domain.

This sequence belongs to the RRP4 family. As to quaternary structure, component of the archaeal exosome complex. Forms a trimer of Rrp4 and/or Csl4 subunits. The trimer associates with a hexameric ring-like arrangement composed of 3 Rrp41-Rrp42 heterodimers.

Its subcellular location is the cytoplasm. Functionally, non-catalytic component of the exosome, which is a complex involved in RNA degradation. Increases the RNA binding and the efficiency of RNA degradation. Confers strong poly(A) specificity to the exosome. This Thermococcus kodakarensis (strain ATCC BAA-918 / JCM 12380 / KOD1) (Pyrococcus kodakaraensis (strain KOD1)) protein is Exosome complex component Rrp4.